We begin with the raw amino-acid sequence, 238 residues long: Ribonuclease PH (238 aa).

Phosphate is bound by residues Arg86 and 124–126; that span reads GTR.

This sequence belongs to the RNase PH family. As to quaternary structure, homohexameric ring arranged as a trimer of dimers.

The catalysed reaction is tRNA(n+1) + phosphate = tRNA(n) + a ribonucleoside 5'-diphosphate. In terms of biological role, phosphorolytic 3'-5' exoribonuclease that plays an important role in tRNA 3'-end maturation. Removes nucleotide residues following the 3'-CCA terminus of tRNAs; can also add nucleotides to the ends of RNA molecules by using nucleoside diphosphates as substrates, but this may not be physiologically important. Probably plays a role in initiation of 16S rRNA degradation (leading to ribosome degradation) during starvation. This chain is Ribonuclease PH, found in Chromobacterium violaceum (strain ATCC 12472 / DSM 30191 / JCM 1249 / CCUG 213 / NBRC 12614 / NCIMB 9131 / NCTC 9757 / MK).